Consider the following 772-residue polypeptide: Angiomotin-like protein 2 (772 aa).

Disordered regions lie at residues 41-158 (GGAG…HVRS), 170-239 (RNGA…SPHF), and 260-299 (QYQY…PSAQ). Basic and acidic residues-rich tracts occupy residues 80–91 (QGGETHLAENRL), 100–112 (KGEE…EAKA), and 142–153 (RRQDEALRELRH). The tract at residues 101 to 303 (GEELPTYEEA…GPPSAQATLG (203 aa)) is required for interaction with CDH5. Residue Tyr-107 is modified to Phosphotyrosine; by FGFR1. Residues 178 to 191 (HMSSSHSFPQLARS) are compositionally biased toward polar residues. A compositionally biased stretch (pro residues) spans 197–214 (PRGPPAEGPEPRGPPPQY). Positions 221-303 (QETAAVTDPR…GPPSAQATLG (83 aa)) are required for interaction with CDH1. Positions 305–578 (AHLAQMETVL…KYLEERAMRQ (274 aa)) form a coiled coil. Glycyl lysine isopeptide (Lys-Gly) (interchain with G-Cter in ubiquitin) cross-links involve residues Lys-343 and Lys-404. Disordered regions lie at residues 596 to 615 (IRHS…LLPG) and 680 to 752 (GLVS…RTPS). The span at 686–699 (RQTDARPAGDRVPA) shows a compositional bias: basic and acidic residues. The segment covering 718 to 733 (DGSTQTDGPADNTSAC) has biased composition (polar residues). Ser-752 and Ser-755 each carry phosphoserine. The PDZ-binding signature appears at 769–772 (EILI).

This sequence belongs to the angiomotin family. In terms of assembly, part of a complex composed of AMOTL2, MAGI1 and CDH5, within the complex AMOTL2 acts as a scaffold protein for the interaction of MAGI1 with CDH5. The complex is required for coupling actin fibers to cell junctions in endothelial cells. Within the complex AMOTL2 (via its N-terminus) interacts with CDH5. Interacts (via N-terminus) with MAGI1. Interacts (via N-terminus) with ACTB; the interaction facilitates binding of cell junction complexes to actin fibers in endothelial cells. Interacts with CDH1; the interaction may facilitate binding of radial actin fibers to cell junction complexes. Interacts with SRC. Interacts with YAP1; the interaction is required for ubiquitination of AMOTL2 and localization of YAP1 to tight junctions. Interacts with WWP1; the interaction facilitates WWP1 interaction with the Crumbs complex and subsequent WWP1 translocation to the plasma membrane. WWP1 interaction with the Crumbs complex promotes WWP1 monoubiquitination of AMOTL2 which subsequently activates the Hippo signaling pathway. When ubiquitinated interacts with LATS2 (via UBA domain); the interaction promotes LATS2 phosphorylation of YAP1. Interacts (via PPXY motif) with WWTR1/TAZ (via WW domain); the interaction promotes WWTR1/TAZ localization to the cytoplasm and thereby inhibition of its transcriptional properties. Interacts with PHLDB2; interaction may facilitate PHLDB2 localization to the myotube podosome cortex that surrounds the core. Phosphorylation at Tyr-107 is necessary for efficient binding to SRC and synergistically functioning with SRC to activate the downstream MAPK pathway. In terms of processing, monoubiquitinated at Lys-343 and Lys-404 by Crumbs complex-bound WWP1. De-ubiquitinated at Lys-343 and Lys-404 by USP9X; the interaction may be promoted by cell contact inhibition. Deubiquitination of AMOTL2 negatively regulates Hippo signaling activation. Expressed in skeletal muscle at neuromuscular junctions (at protein level).

It localises to the recycling endosome. Its subcellular location is the cytoplasm. The protein resides in the cell projection. It is found in the podosome. The protein localises to the cell junction. Functionally, regulates the translocation of phosphorylated SRC to peripheral cell-matrix adhesion sites. Required for proper architecture of actin filaments. Plays a role in coupling actin fibers to cell junctions in endothelial cells and is therefore required for correct endothelial cell morphology via facilitating transcellular transmission of mechanical force resulting in endothelial cell elongation. Required for the anchoring of radial actin fibers to CDH1 junction complexes at the cell membrane which facilitates organization of radial actin fiber structure and cellular response to contractile forces. This contributes to maintenance of cell area, size, shape, epithelial sheet organization and trophectoderm cell properties that facilitate blastocyst zona hatching. Inhibits the Wnt/beta-catenin signaling pathway, probably by recruiting CTNNB1 to recycling endosomes and hence preventing its translocation to the nucleus. Participates in angiogenesis. Activates the Hippo signaling pathway in response to cell contact inhibition via interaction with and ubiquitination by Crumbs complex-bound WWP1. Ubiquitinated AMOTL2 then interacts with LATS2 which in turn phosphorylates YAP1, excluding it from the nucleus and localizing it to the cytoplasm and tight junctions, therefore ultimately repressing YAP1-driven transcription of target genes. Acts to inhibit WWTR1/TAZ transcriptional coactivator activity via sequestering WWTR1/TAZ in the cytoplasm and at tight junctions. Regulates the size and protein composition of the podosome cortex and core at myofibril neuromuscular junctions. Selectively promotes FGF-induced MAPK activation through SRC. May play a role in the polarity, proliferation and migration of endothelial cells. This Mus musculus (Mouse) protein is Angiomotin-like protein 2.